We begin with the raw amino-acid sequence, 192 residues long: NF-kappa-B inhibitor-interacting Ras-like protein 1 (192 aa).

The interval 1–192 (MGKGCKVVVC…KSKGTPSNDI (192 aa)) is small GTPase-like. 11–18 (GMASVGKT) provides a ligand contact to GTP. The short motif at 35–43 (TSDTQEDIY) is the Effector region element. GTP is bound by residues 61–65 (DTRGL) and 120–123 (NKCE). Residues 169–192 (TQPQSKSAFPLPGRKSKGTPSNDI) form a disordered region.

It belongs to the small GTPase superfamily. Ras family. KappaB-Ras subfamily.

The protein localises to the cytoplasm. In terms of biological role, atypical Ras-like protein that acts as a potent regulator of NF-kappa-B activity by preventing the degradation of NF-kappa-B inhibitor beta (NFKBIB) by most signals, explaining why NFKBIB is more resistant to degradation. The polypeptide is NF-kappa-B inhibitor-interacting Ras-like protein 1 (nkiras1) (Danio rerio (Zebrafish)).